The chain runs to 234 residues: Biosynthetic peptidoglycan transglycosylase (234 aa).

Residues valine 8 to alanine 28 traverse the membrane as a helical segment.

It belongs to the glycosyltransferase 51 family.

The protein resides in the cell inner membrane. The catalysed reaction is [GlcNAc-(1-&gt;4)-Mur2Ac(oyl-L-Ala-gamma-D-Glu-L-Lys-D-Ala-D-Ala)](n)-di-trans,octa-cis-undecaprenyl diphosphate + beta-D-GlcNAc-(1-&gt;4)-Mur2Ac(oyl-L-Ala-gamma-D-Glu-L-Lys-D-Ala-D-Ala)-di-trans,octa-cis-undecaprenyl diphosphate = [GlcNAc-(1-&gt;4)-Mur2Ac(oyl-L-Ala-gamma-D-Glu-L-Lys-D-Ala-D-Ala)](n+1)-di-trans,octa-cis-undecaprenyl diphosphate + di-trans,octa-cis-undecaprenyl diphosphate + H(+). It functions in the pathway cell wall biogenesis; peptidoglycan biosynthesis. In terms of biological role, peptidoglycan polymerase that catalyzes glycan chain elongation from lipid-linked precursors. This chain is Biosynthetic peptidoglycan transglycosylase, found in Ralstonia nicotianae (strain ATCC BAA-1114 / GMI1000) (Ralstonia solanacearum).